The following is a 181-amino-acid chain: Adenine phosphoribosyltransferase (181 aa).

This sequence belongs to the purine/pyrimidine phosphoribosyltransferase family. Homodimer.

It is found in the cytoplasm. It catalyses the reaction AMP + diphosphate = 5-phospho-alpha-D-ribose 1-diphosphate + adenine. Its pathway is purine metabolism; AMP biosynthesis via salvage pathway; AMP from adenine: step 1/1. Its function is as follows. Catalyzes a salvage reaction resulting in the formation of AMP, that is energically less costly than de novo synthesis. This chain is Adenine phosphoribosyltransferase, found in Rhodopseudomonas palustris (strain HaA2).